A 125-amino-acid polypeptide reads, in one-letter code: Oxytocin-neurophysin 1 (125 aa).

An N-terminal signal peptide occupies residues methionine 1–alanine 19. Cysteine 20 and cysteine 25 form a disulfide bridge. Glycine 28 bears the Glycine amide mark. 7 disulfide bridges follow: cysteine 41–cysteine 85, cysteine 44–cysteine 58, cysteine 52–cysteine 75, cysteine 59–cysteine 65, cysteine 92–cysteine 104, cysteine 98–cysteine 116, and cysteine 105–cysteine 110.

It belongs to the vasopressin/oxytocin family. As to quaternary structure, interacts with oxytocin receptor (Ki=1.5 nM). Interacts with vasopressin V1aR/AVPR1A (Ki=37 nM), V1bR/AVPR1B (Ki=222 nM) and V2R/AVPR2 receptors (Ki=823 nM).

Its subcellular location is the secreted. In terms of biological role, neurophysin 1 specifically binds oxytocin. Oxytocin causes contraction of the smooth muscle of the uterus and of the mammary gland. Acts by binding to oxytocin receptor (OXTR). This Homo sapiens (Human) protein is Oxytocin-neurophysin 1 (OXT).